Consider the following 280-residue polypeptide: Diaminopimelate epimerase (280 aa).

Positions 11 and 64 each coordinate substrate. Cysteine 73 acts as the Proton donor in catalysis. Residues 74–75 (GN), asparagine 162, asparagine 195, and 213–214 (ER) contribute to the substrate site. Catalysis depends on cysteine 222, which acts as the Proton acceptor. 223-224 (GT) lines the substrate pocket.

The protein belongs to the diaminopimelate epimerase family. As to quaternary structure, homodimer.

It is found in the cytoplasm. It carries out the reaction (2S,6S)-2,6-diaminopimelate = meso-2,6-diaminopimelate. The protein operates within amino-acid biosynthesis; L-lysine biosynthesis via DAP pathway; DL-2,6-diaminopimelate from LL-2,6-diaminopimelate: step 1/1. In terms of biological role, catalyzes the stereoinversion of LL-2,6-diaminopimelate (L,L-DAP) to meso-diaminopimelate (meso-DAP), a precursor of L-lysine and an essential component of the bacterial peptidoglycan. This Pelotomaculum thermopropionicum (strain DSM 13744 / JCM 10971 / SI) protein is Diaminopimelate epimerase.